The primary structure comprises 420 residues: Gamma-glutamyl phosphate reductase (420 aa).

Belongs to the gamma-glutamyl phosphate reductase family.

It is found in the cytoplasm. It catalyses the reaction L-glutamate 5-semialdehyde + phosphate + NADP(+) = L-glutamyl 5-phosphate + NADPH + H(+). It functions in the pathway amino-acid biosynthesis; L-proline biosynthesis; L-glutamate 5-semialdehyde from L-glutamate: step 2/2. Its function is as follows. Catalyzes the NADPH-dependent reduction of L-glutamate 5-phosphate into L-glutamate 5-semialdehyde and phosphate. The product spontaneously undergoes cyclization to form 1-pyrroline-5-carboxylate. The chain is Gamma-glutamyl phosphate reductase from Cereibacter sphaeroides (strain KD131 / KCTC 12085) (Rhodobacter sphaeroides).